The sequence spans 35 residues: uncharacterized protein (35 aa).

Residues 10–30 traverse the membrane as a helical segment; it reads LMITASFFAIFIIIVVSVLLL.

It localises to the membrane. This is an uncharacterized protein from Salmonella paratyphi A (strain ATCC 9150 / SARB42).